The sequence spans 1085 residues: Error-prone DNA polymerase (1085 aa).

It belongs to the DNA polymerase type-C family. DnaE2 subfamily.

The protein localises to the cytoplasm. The catalysed reaction is DNA(n) + a 2'-deoxyribonucleoside 5'-triphosphate = DNA(n+1) + diphosphate. In terms of biological role, DNA polymerase involved in damage-induced mutagenesis and translesion synthesis (TLS). It is not the major replicative DNA polymerase. This is Error-prone DNA polymerase from Symbiobacterium thermophilum (strain DSM 24528 / JCM 14929 / IAM 14863 / T).